The following is a 73-amino-acid chain: Translation initiation factor IF-1 2 (73 aa).

Residues 1–72 (MAKEELVEFG…TKGRINYRHK (72 aa)) form the S1-like domain.

This sequence belongs to the IF-1 family. As to quaternary structure, component of the 30S ribosomal translation pre-initiation complex which assembles on the 30S ribosome in the order IF-2 and IF-3, IF-1 and N-formylmethionyl-tRNA(fMet); mRNA recruitment can occur at any time during PIC assembly.

The protein resides in the cytoplasm. One of the essential components for the initiation of protein synthesis. Stabilizes the binding of IF-2 and IF-3 on the 30S subunit to which N-formylmethionyl-tRNA(fMet) subsequently binds. Helps modulate mRNA selection, yielding the 30S pre-initiation complex (PIC). Upon addition of the 50S ribosomal subunit IF-1, IF-2 and IF-3 are released leaving the mature 70S translation initiation complex. This Cupriavidus pinatubonensis (strain JMP 134 / LMG 1197) (Cupriavidus necator (strain JMP 134)) protein is Translation initiation factor IF-1 2.